A 342-amino-acid polypeptide reads, in one-letter code: Phenylalanine--tRNA ligase alpha subunit (342 aa).

Glu-257 serves as a coordination point for Mg(2+).

It belongs to the class-II aminoacyl-tRNA synthetase family. Phe-tRNA synthetase alpha subunit type 1 subfamily. Tetramer of two alpha and two beta subunits. Mg(2+) is required as a cofactor.

Its subcellular location is the cytoplasm. The catalysed reaction is tRNA(Phe) + L-phenylalanine + ATP = L-phenylalanyl-tRNA(Phe) + AMP + diphosphate + H(+). This is Phenylalanine--tRNA ligase alpha subunit from Chlamydia trachomatis serovar A (strain ATCC VR-571B / DSM 19440 / HAR-13).